An 862-amino-acid polypeptide reads, in one-letter code: MVSRSYSNLLDLASGNFHSFSREKKRFPRVATVTGVLSELDDDNNSNSVCSDAPSSVTQDRIIIVGNQLPIKSHRNSAGKLSFSWDNDSLLLQLKDGMREDMEVVYIGCLKEQIDTVEQDDVSQRLLENFKCVPAYIPPELFTKYYHGFCKQHLWPLFHYMLPLTPDLGGRFDRSLWQAYLSVNKIFADKVMEVISPDDDFVWVHDYHLMVLPTFLRKRFNRVKLGFFLHSPFPSSEIYRTLPVRNELLRALLNADLIGFHTFDYARHFLSCCSRMLGLSYQSKRGTIGLEYYGRTVSIKILPVGIHISQLQSILNLPETQTKVAELRDQFLDQKVLLGVDDMDIFKGISLKLLAMEQLLTQHPEKRGRVVLVQIANPARGRGKDVQEVQSETEATVKRINEMFGRPGYQPVVLIDTPLQFFERIAYYVIAECCLVTAVRDGMNLIPYEYIICRQGNPKLNETIGLDPSAAKKSMLVVSEFIGCSPSLSGAIRVNPWNIDAVTEAMDYALIVSEAEKQMRHEKHHKYVSTHDVAYWARSFIQDLERACGDHVRKRCWGIGFGLGFRVVALDPSFKKLSIEHIVSAYKRTKNRAILLDYDGTMVQPGSIRTTPTRETIEILNNLSSDPKNIVYLVSGKDRRTLTEWFSSCDDLGLGAEHGYFIRPNDGTDWETSSLVSGFEWKQIAEPVMRLYTETTDGSTIETKETALVWNYQFADPDFGSCQAKELMEHLESVLTNDPVSVKTGQQLVEVKPQGVNKGLVAERLLTTMQEKGKLLDFILCVGDDRSDEDMFEVIMSAKDGPALSPVAEIFACTVGQKPSKAKYYLDDTAEIIRMLDGLAATNTTISDQTDSTATVPTKDLF.

The residue at position 5 (Ser5) is a Phosphoserine. The residue at position 32 (Thr32) is a Phosphothreonine. The tract at residues 60-546 (DRIIIVGNQL…ARSFIQDLER (487 aa)) is glycosyltransferase.

In the N-terminal section; belongs to the glycosyltransferase 20 family. This sequence in the C-terminal section; belongs to the trehalose phosphatase family. Binds to the phosphopeptide-binding site of GRF/14-3-3 and to MBF1c. Both Ser-5 and Thr-32 must be phosphorylated for binding to GRF/14-3-3. As to expression, low expression in leaves, stems, flower buds, flowers and siliques.

It carries out the reaction D-glucose 6-phosphate + UDP-alpha-D-glucose = alpha,alpha-trehalose 6-phosphate + UDP + H(+). This Arabidopsis thaliana (Mouse-ear cress) protein is Alpha,alpha-trehalose-phosphate synthase [UDP-forming] 5 (TPS5).